We begin with the raw amino-acid sequence, 537 residues long: Glutamyl-tRNA reductase, chloroplastic (537 aa).

The N-terminal 48 residues, 1–48 (MMASTTSATAAGGAFAAAKTRAGSSAAGGGACARVAAGGRRRSGVVVR), are a transit peptide targeting the chloroplast. Substrate-binding positions include 134 to 137 (TCNR), S194, 199 to 201 (EGQ), and Q205. C135 acts as the Nucleophile in catalysis. An NADP(+)-binding site is contributed by 276–281 (GAGKMG).

The protein belongs to the glutamyl-tRNA reductase family.

The protein resides in the plastid. Its subcellular location is the chloroplast. It carries out the reaction (S)-4-amino-5-oxopentanoate + tRNA(Glu) + NADP(+) = L-glutamyl-tRNA(Glu) + NADPH + H(+). Its pathway is porphyrin-containing compound metabolism; protoporphyrin-IX biosynthesis; 5-aminolevulinate from L-glutamyl-tRNA(Glu): step 1/2. Catalyzes the NADPH-dependent reduction of glutamyl-tRNA(Glu) to glutamate 1-semialdehyde (GSA). This chain is Glutamyl-tRNA reductase, chloroplastic, found in Oryza sativa subsp. indica (Rice).